The chain runs to 136 residues: Small ribosomal subunit protein uS11 (136 aa).

Disordered stretches follow at residues 1–20 (MAQR…NVTN) and 115–136 (VTPQ…EKAR). Over residues 125–136 (PPKRVLKREKAR) the composition is skewed to basic residues.

Belongs to the universal ribosomal protein uS11 family. As to quaternary structure, part of the 30S ribosomal subunit. Interacts with proteins S7 and S18. Binds to IF-3.

Located on the platform of the 30S subunit, it bridges several disparate RNA helices of the 16S rRNA. Forms part of the Shine-Dalgarno cleft in the 70S ribosome. The sequence is that of Small ribosomal subunit protein uS11 from Mycoplasmopsis pulmonis (strain UAB CTIP) (Mycoplasma pulmonis).